The chain runs to 179 residues: Large ribosomal subunit protein uL22c (179 aa).

It belongs to the universal ribosomal protein uL22 family. In terms of assembly, part of the 50S ribosomal subunit.

It localises to the plastid. The protein resides in the chloroplast. This protein binds specifically to 23S rRNA. Its function is as follows. The globular domain of the protein is located near the polypeptide exit tunnel on the outside of the subunit, while an extended beta-hairpin is found that lines the wall of the exit tunnel in the center of the 70S ribosome. This Ranunculus macranthus (Large buttercup) protein is Large ribosomal subunit protein uL22c (rpl22).